The chain runs to 525 residues: ADP-ribosylation factor GTPase-activating protein 3 (525 aa).

Residues 10-126 (LAIFKRLRSV…IKTLATQATR (117 aa)) enclose the Arf-GAP domain. The C4-type zinc-finger motif lies at 25–48 (CFDCGAKNPSWASISYGVFLCIDC). Residues 160-233 (VSGATQASAQ…KGLGAKKGSL (74 aa)) form a disordered region. The segment covering 162–177 (GATQASAQPEPASSTP) has biased composition (polar residues). Residues 222–233 (AKKGLGAKKGSL) show a composition bias toward low complexity. Ser-232, Ser-242, Ser-271, and Ser-275 each carry phosphoserine. The segment at 249 to 271 (QAQAVDKRKEQEDLARGTPKEES) is disordered. The span at 293–305 (LNLSGQKKAEAER) shows a compositional bias: basic and acidic residues. 2 disordered regions span residues 293 to 364 (LNLS…SSSR) and 377 to 428 (FSSW…EAQK). Residues 319 to 333 (HSVTSDMQTIEQESP) show a composition bias toward polar residues. At Ser-332 the chain carries Phosphoserine. The span at 349–363 (SYFSSSSKWSEQSSS) shows a compositional bias: low complexity. Ser-379 is subject to Phosphoserine. A compositionally biased stretch (basic and acidic residues) spans 387–398 (YWKKDSSRDPEP). Residues Ser-437, Ser-460, Ser-462, Ser-464, Ser-466, and Ser-467 each carry the phosphoserine modification.

It is found in the cytoplasm. The protein resides in the golgi apparatus membrane. With respect to regulation, GAP activity stimulated by phosphatidylinositol 4,5-bisphosphate (PIP2). Functionally, GTPase-activating protein (GAP) for ADP ribosylation factor 1 (ARF1). Hydrolysis of ARF1-bound GTP may lead to dissociation of coatomer from Golgi-derived membranes to allow fusion with target membranes. This chain is ADP-ribosylation factor GTPase-activating protein 3, found in Rattus norvegicus (Rat).